The chain runs to 123 residues: Large ribosomal subunit protein bL12 (123 aa).

It belongs to the bacterial ribosomal protein bL12 family. In terms of assembly, homodimer. Part of the ribosomal stalk of the 50S ribosomal subunit. Forms a multimeric L10(L12)X complex, where L10 forms an elongated spine to which 2 to 4 L12 dimers bind in a sequential fashion. Binds GTP-bound translation factors.

Functionally, forms part of the ribosomal stalk which helps the ribosome interact with GTP-bound translation factors. Is thus essential for accurate translation. This Shewanella amazonensis (strain ATCC BAA-1098 / SB2B) protein is Large ribosomal subunit protein bL12.